The sequence spans 507 residues: MTEQKYIVALDQGTTSSRAVILDHDANIVSSSQREFTQIYPKAGWVEHDPMEIWATQSSTLVEALAKAGIRSDELAGIGITNQRETTIVWNKETGKPVYNAIVWQCRRTADICEDLKARGLEDYVRDNTGLVLDPYFSGTKVKWILDNVEGAREDAEAGKLLFGTVDTWLVWKMTQGRVHVTDYTNASRTMLFNINDLCWDQKLLDEMGIPSSMMPEVKRSSEVYGQTNLGGKGGTRIPIAGIAGDQQAALYGQMCVEAGQAKNTYGTGCFLLMNTGQEKVTSKNGLLTTLACGPKGEPAYALEGAVFMGGASIQWLRDEMKLLAGAEDSEYFATKVDSSNGVYVVPAFTGLGAPYWDAYARGTIVGLTRGVNSNHIIRATLEGIAYQTRDVLDAMQADSGIKLANLRVDGGAVANNFLMQFQSDVLDTEVHRPEVTEVTALGAAYLAGLAVGFWDSIDELQDKAVLNRTFMPHHDEEKRNRRYKGWKRAIKCAQVWSELHDDDDEE.

Thr-14 is a binding site for ADP. ATP contacts are provided by Thr-14, Thr-15, and Ser-16. Position 14 (Thr-14) interacts with sn-glycerol 3-phosphate. Arg-18 provides a ligand contact to ADP. 4 residues coordinate sn-glycerol 3-phosphate: Arg-84, Glu-85, Tyr-136, and Asp-246. Arg-84, Glu-85, Tyr-136, Asp-246, and Gln-247 together coordinate glycerol. ADP contacts are provided by Thr-268 and Gly-311. The ATP site is built by Thr-268, Gly-311, Gln-315, and Gly-412. ADP contacts are provided by Gly-412 and Asn-416.

The protein belongs to the FGGY kinase family.

It catalyses the reaction glycerol + ATP = sn-glycerol 3-phosphate + ADP + H(+). The protein operates within polyol metabolism; glycerol degradation via glycerol kinase pathway; sn-glycerol 3-phosphate from glycerol: step 1/1. Its activity is regulated as follows. Inhibited by fructose 1,6-bisphosphate (FBP). Its function is as follows. Key enzyme in the regulation of glycerol uptake and metabolism. Catalyzes the phosphorylation of glycerol to yield sn-glycerol 3-phosphate. The chain is Glycerol kinase from Vibrio atlanticus (strain LGP32) (Vibrio splendidus (strain Mel32)).